A 320-amino-acid polypeptide reads, in one-letter code: Very-long-chain 3-oxoacyl-CoA reductase (320 aa).

The helical transmembrane segment at Phe-17 to Leu-37 threads the bilayer. An NADP(+)-binding site is contributed by Gly-56–Leu-85. A run of 2 helical transmembrane segments spans residues Gly-189 to Tyr-209 and Ala-283 to Met-303. Ser-196 contributes to the substrate binding site. Tyr-209 (proton acceptor) is an active-site residue.

The protein belongs to the short-chain dehydrogenases/reductases (SDR) family. 17-beta-HSD 3 subfamily.

The protein resides in the endoplasmic reticulum membrane. The catalysed reaction is a very-long-chain (3R)-3-hydroxyacyl-CoA + NADP(+) = a very-long-chain 3-oxoacyl-CoA + NADPH + H(+). It carries out the reaction 17beta-estradiol + NAD(+) = estrone + NADH + H(+). It catalyses the reaction 17beta-estradiol + NADP(+) = estrone + NADPH + H(+). The enzyme catalyses 3-oxooctadecanoyl-CoA + NADPH + H(+) = (3R)-hydroxyoctadecanoyl-CoA + NADP(+). The catalysed reaction is (7Z,10Z,13Z,16Z)-3-oxodocosatetraenoyl-CoA + NADPH + H(+) = (3R)-hydroxy-(7Z,10Z,13Z,16Z)-docosatetraenoyl-CoA + NADP(+). It carries out the reaction 3-oxo-(7Z,10Z,13Z,16Z,19Z)-docosapentaenoyl-CoA + NADPH + H(+) = (3R)-hydroxy-(7Z,10Z,13Z,16Z,19Z)-docosapentaenoyl-CoA + NADP(+). It catalyses the reaction (8Z,11Z,14Z)-3-oxoeicosatrienoyl-CoA + NADPH + H(+) = (3R)-hydroxy-(8Z,11Z,14Z)-eicosatrienoyl-CoA + NADP(+). It participates in lipid metabolism; fatty acid biosynthesis. The protein operates within steroid biosynthesis; estrogen biosynthesis. Functionally, catalyzes the second of the four reactions of the long-chain fatty acids elongation cycle. This endoplasmic reticulum-bound enzymatic process, allows the addition of two carbons to the chain of long- and very long-chain fatty acids/VLCFAs per cycle. This enzyme has a 3-ketoacyl-CoA reductase activity, reducing 3-ketoacyl-CoA to 3-hydroxyacyl-CoA, within each cycle of fatty acid elongation. Thereby, it may participate in the production of VLCFAs of different chain lengths that are involved in multiple biological processes as precursors of membrane lipids and lipid mediators. May also catalyze the transformation of estrone (E1) into estradiol (E2) and play a role in estrogen formation. The sequence is that of Very-long-chain 3-oxoacyl-CoA reductase (hsd17b12) from Xenopus tropicalis (Western clawed frog).